Here is a 460-residue protein sequence, read N- to C-terminus: Glycine--tRNA ligase (460 aa).

Residues Arg98 and Glu172 each contribute to the substrate site. Residues 204–206, 214–219, 288–289, and 332–335 each bind ATP; these read RNE, FRTREF, EL, and GADR. 219 to 223 lines the substrate pocket; that stretch reads FEQME. Position 328–332 (328–332) interacts with substrate; the sequence is EPSLG.

Belongs to the class-II aminoacyl-tRNA synthetase family. Homodimer.

Its subcellular location is the cytoplasm. It carries out the reaction tRNA(Gly) + glycine + ATP = glycyl-tRNA(Gly) + AMP + diphosphate. Catalyzes the attachment of glycine to tRNA(Gly). This is Glycine--tRNA ligase from Geobacillus kaustophilus (strain HTA426).